Here is a 541-residue protein sequence, read N- to C-terminus: EH domain-containing protein 4 (541 aa).

At M1 the chain carries N-acetylmethionine. Residues 1–20 (MFSWMGRQAGGRERSGGMDA) are disordered. Residue S15 is modified to Phosphoserine. The 232-residue stretch at 58–289 (FENKPMILLV…DLFRDIQSLP (232 aa)) folds into the Dynamin-type G domain. Residues 68 to 75 (GQYSTGKT) are G1 motif. 68–75 (GQYSTGKT) provides a ligand contact to ATP. Positions 94-95 (EP) are G2 motif. The G3 motif stretch occupies residues 156–159 (DSPG). At S162 the chain carries Phosphoserine. The G4 motif stretch occupies residues 222–225 (NKAD). Residue K223 coordinates ATP. Residue V246 is a region of interest, G5 motif. W261 is an ATP binding site. An EH domain is found at 447 to 535 (DKPVYDELFY…PHLVPPSHRK (89 aa)). Phosphotyrosine is present on Y451. At S459 the chain carries Phosphoserine. One can recognise an EF-hand domain in the interval 479–514 (LPNSVLGKIWKLADCDCDGMLDEEEFALAKHLIKIK). Ca(2+) contacts are provided by D492, D494, D496, M498, and E503.

The protein belongs to the TRAFAC class dynamin-like GTPase superfamily. Dynamin/Fzo/YdjA family. EHD subfamily. Homooligomer, and heterooligomer with EHD1, EHD2 and EHD3. Forms a complex with EHD4 and MICALL1; the complex controls CDH5 trafficking and coordinates angiogenesis.

It localises to the early endosome membrane. The protein resides in the recycling endosome membrane. The protein localises to the cell membrane. It is found in the cell junction. Its subcellular location is the adherens junction. Functionally, ATP- and membrane-binding protein that probably controls membrane reorganization/tubulation upon ATP hydrolysis. Plays a role in early endosomal transport. During sprouting angiogenesis, in complex with PACSIN2 and MICALL1, forms recycling endosome-like tubular structure at asymmetric adherens junctions to control CDH5 trafficking. This is EH domain-containing protein 4 from Mus musculus (Mouse).